Here is a 370-residue protein sequence, read N- to C-terminus: MKGMKEYIKKLEEGSDLSSEEAEAAIGEILSTAEDEEIGAFLLALRAKGEKPQEIAGFVRGMKQAGNTIKPVTPFRVIDTCGTGGDGLNTINVSTAAAIVTAAAGVPVAKHGNRAATSMSGSSDVLEALGIKVDLTPGQVRKTIEKIGIGFMFAPVFHPAMKRVAGVRKKLGVRTVFNILGPLTNPAGAKGQVVGVFDKKLCEPIAYALAELGTEHALVVHGDGMDEISNTGETFVAELKDGEVSTYTITPEAMGMLRAKPEDIKGGTPKENARDLLCIFKGQKGPKRDLVILNAAAALYVSGIVGSIRQAIPIAEDAIDSGKVMVKFNQFRNFTAELSIQGKKEGSCPGEAFLASSDTSVLSPASGEKA.

Residues Gly-82, 85-86 (GD), Thr-90, 92-95 (NVST), 110-118 (KHGNRAATS), and Ser-122 each bind 5-phospho-alpha-D-ribose 1-diphosphate. Gly-82 serves as a coordination point for anthranilate. Ser-94 contacts Mg(2+). An anthranilate-binding site is contributed by Asn-113. Residue Arg-168 participates in anthranilate binding. The Mg(2+) site is built by Asp-226 and Glu-227.

This sequence belongs to the anthranilate phosphoribosyltransferase family. In terms of assembly, homodimer. Mg(2+) is required as a cofactor.

It catalyses the reaction N-(5-phospho-beta-D-ribosyl)anthranilate + diphosphate = 5-phospho-alpha-D-ribose 1-diphosphate + anthranilate. The protein operates within amino-acid biosynthesis; L-tryptophan biosynthesis; L-tryptophan from chorismate: step 2/5. Functionally, catalyzes the transfer of the phosphoribosyl group of 5-phosphorylribose-1-pyrophosphate (PRPP) to anthranilate to yield N-(5'-phosphoribosyl)-anthranilate (PRA). The sequence is that of Anthranilate phosphoribosyltransferase from Methanosarcina acetivorans (strain ATCC 35395 / DSM 2834 / JCM 12185 / C2A).